Here is a 162-residue protein sequence, read N- to C-terminus: Ribosome maturation factor RimP (162 aa).

Belongs to the RimP family.

It is found in the cytoplasm. Functionally, required for maturation of 30S ribosomal subunits. The chain is Ribosome maturation factor RimP from Streptococcus gordonii (strain Challis / ATCC 35105 / BCRC 15272 / CH1 / DL1 / V288).